Reading from the N-terminus, the 468-residue chain is Cysteine--tRNA ligase (468 aa).

Residue Cys28 participates in Zn(2+) binding. Positions 30 to 40 match the 'HIGH' region motif; that stretch reads PTVYNYIHIGN. Zn(2+) is bound by residues Cys212, His237, and Glu241. The 'KMSKS' region signature appears at 271 to 275; it reads KMSKS. Lys274 is an ATP binding site.

This sequence belongs to the class-I aminoacyl-tRNA synthetase family. As to quaternary structure, monomer. It depends on Zn(2+) as a cofactor.

Its subcellular location is the cytoplasm. It catalyses the reaction tRNA(Cys) + L-cysteine + ATP = L-cysteinyl-tRNA(Cys) + AMP + diphosphate. The chain is Cysteine--tRNA ligase from Latilactobacillus sakei subsp. sakei (strain 23K) (Lactobacillus sakei subsp. sakei).